A 193-amino-acid polypeptide reads, in one-letter code: Peptidyl-tRNA hydrolase (193 aa).

Residue Tyr-16 coordinates tRNA. His-21 functions as the Proton acceptor in the catalytic mechanism. TRNA-binding residues include Phe-67, Asn-69, and Asn-115.

Belongs to the PTH family. As to quaternary structure, monomer.

The protein localises to the cytoplasm. It carries out the reaction an N-acyl-L-alpha-aminoacyl-tRNA + H2O = an N-acyl-L-amino acid + a tRNA + H(+). Its function is as follows. Hydrolyzes ribosome-free peptidyl-tRNAs (with 1 or more amino acids incorporated), which drop off the ribosome during protein synthesis, or as a result of ribosome stalling. In terms of biological role, catalyzes the release of premature peptidyl moieties from peptidyl-tRNA molecules trapped in stalled 50S ribosomal subunits, and thus maintains levels of free tRNAs and 50S ribosomes. The sequence is that of Peptidyl-tRNA hydrolase from Vesicomyosocius okutanii subsp. Calyptogena okutanii (strain HA).